The sequence spans 238 residues: tRNA (guanine-N(7)-)-methyltransferase (238 aa).

The span at 1–12 (MTDTAENQTPND) shows a compositional bias: polar residues. Residues 1-20 (MTDTAENQTPNDRQAGHPRS) are disordered. S-adenosyl-L-methionine contacts are provided by glutamate 70, aspartate 95, aspartate 122, and aspartate 145. The active site involves aspartate 145. Substrate-binding positions include lysine 149, aspartate 181, and 216 to 219 (TKFE).

The protein belongs to the class I-like SAM-binding methyltransferase superfamily. TrmB family.

The enzyme catalyses guanosine(46) in tRNA + S-adenosyl-L-methionine = N(7)-methylguanosine(46) in tRNA + S-adenosyl-L-homocysteine. It participates in tRNA modification; N(7)-methylguanine-tRNA biosynthesis. Catalyzes the formation of N(7)-methylguanine at position 46 (m7G46) in tRNA. The chain is tRNA (guanine-N(7)-)-methyltransferase from Neisseria gonorrhoeae (strain NCCP11945).